The following is a 219-amino-acid chain: Endonuclease V (219 aa).

The Mg(2+) site is built by Asp-41 and Asp-107.

This sequence belongs to the endonuclease V family. Requires Mg(2+) as cofactor.

It is found in the cytoplasm. It catalyses the reaction Endonucleolytic cleavage at apurinic or apyrimidinic sites to products with a 5'-phosphate.. In terms of biological role, DNA repair enzyme involved in the repair of deaminated bases. Selectively cleaves double-stranded DNA at the second phosphodiester bond 3' to a deoxyinosine leaving behind the intact lesion on the nicked DNA. This Desulfurococcus amylolyticus (strain DSM 18924 / JCM 16383 / VKM B-2413 / 1221n) (Desulfurococcus kamchatkensis) protein is Endonuclease V.